The primary structure comprises 402 residues: Major outer membrane porin (402 aa).

The first 22 residues, 1–22 (MKKLLKSALLFAATGSALSLQA), serve as a signal peptide directing secretion.

This sequence belongs to the chlamydial porin (CP) (TC 1.B.2) family. In terms of assembly, part of a disulfide cross-linked outer membrane complex (COMC) composed of the major outer membrane porin (MOMP), the small cysteine-rich protein (OmcA) and the large cysteine-rich periplasmic protein (OmcB).

Its subcellular location is the cell outer membrane. Functionally, in elementary bodies (EBs, the infectious stage, which is able to survive outside the host cell) provides the structural integrity of the outer envelope through disulfide cross-links with the small cysteine-rich protein and the large cysteine-rich periplasmic protein. It has been described in publications as the Sarkosyl-insoluble COMC (Chlamydia outer membrane complex), and serves as the functional equivalent of peptidoglycan. It is present but some of the disulfide bonds are reduced in reticulate bodies (RBs). Its function is as follows. Permits diffusion of specific solutes through the outer membrane. The polypeptide is Major outer membrane porin (ompA) (Chlamydophila psittaci (strain ATCC VR-125 / 6BC) (Chlamydia psittaci)).